The following is a 194-amino-acid chain: Peptidyl-tRNA hydrolase (194 aa).

Y16 contributes to the tRNA binding site. Residue H21 is the Proton acceptor of the active site. TRNA contacts are provided by F67, N69, and N115.

This sequence belongs to the PTH family. Monomer.

It is found in the cytoplasm. The catalysed reaction is an N-acyl-L-alpha-aminoacyl-tRNA + H2O = an N-acyl-L-amino acid + a tRNA + H(+). Hydrolyzes ribosome-free peptidyl-tRNAs (with 1 or more amino acids incorporated), which drop off the ribosome during protein synthesis, or as a result of ribosome stalling. Functionally, catalyzes the release of premature peptidyl moieties from peptidyl-tRNA molecules trapped in stalled 50S ribosomal subunits, and thus maintains levels of free tRNAs and 50S ribosomes. The protein is Peptidyl-tRNA hydrolase of Salmonella paratyphi B (strain ATCC BAA-1250 / SPB7).